A 1272-amino-acid polypeptide reads, in one-letter code: CST complex subunit CTC1 (1272 aa).

It belongs to the CTC1 family. As to quaternary structure, component of the CST complex, composed of CTC1, TEN1 and STN1. Interacts with POT1A.

It is found in the nucleus. It localises to the chromosome. The protein resides in the telomere. Its function is as follows. Component of the CST complex, a complex that binds to single-stranded DNA and is required to protect telomeres from DNA degradation. The CST complex binds single-stranded DNA with high affinity in a sequence-independent manner, while isolated subunits bind DNA with low affinity by themselves. Associates with enzymatically active telomerase. The sequence is that of CST complex subunit CTC1 from Arabidopsis thaliana (Mouse-ear cress).